Here is a 271-residue protein sequence, read N- to C-terminus: Acetyl-coenzyme A carboxylase carboxyl transferase subunit beta (271 aa).

Residues L21–A271 enclose the CoA carboxyltransferase N-terminal domain. Zn(2+) contacts are provided by C25, C28, C43, and C46. The C4-type zinc finger occupies C25–C46.

Belongs to the AccD/PCCB family. As to quaternary structure, acetyl-CoA carboxylase is a heterohexamer composed of biotin carboxyl carrier protein (AccB), biotin carboxylase (AccC) and two subunits each of ACCase subunit alpha (AccA) and ACCase subunit beta (AccD). Zn(2+) is required as a cofactor.

Its subcellular location is the cytoplasm. The catalysed reaction is N(6)-carboxybiotinyl-L-lysyl-[protein] + acetyl-CoA = N(6)-biotinyl-L-lysyl-[protein] + malonyl-CoA. It participates in lipid metabolism; malonyl-CoA biosynthesis; malonyl-CoA from acetyl-CoA: step 1/1. Its function is as follows. Component of the acetyl coenzyme A carboxylase (ACC) complex. Biotin carboxylase (BC) catalyzes the carboxylation of biotin on its carrier protein (BCCP) and then the CO(2) group is transferred by the transcarboxylase to acetyl-CoA to form malonyl-CoA. This is Acetyl-coenzyme A carboxylase carboxyl transferase subunit beta from Lacticaseibacillus paracasei (strain ATCC 334 / BCRC 17002 / CCUG 31169 / CIP 107868 / KCTC 3260 / NRRL B-441) (Lactobacillus paracasei).